The primary structure comprises 890 residues: Translation initiation factor IF-2 (890 aa).

The interval Leu45–Ala303 is disordered. Residues Ser67–Val81 show a composition bias toward polar residues. Residues Val92–Asp217 show a composition bias toward basic and acidic residues. Over residues Gly252 to Asn266 the composition is skewed to basic residues. A compositionally biased stretch (basic and acidic residues) spans Lys267–Ala280. In terms of domain architecture, tr-type G spans Pro389 to Lys558. Residues Gly398–Thr405 form a G1 region. Residue Gly398–Thr405 coordinates GTP. The segment at Gly423–His427 is G2. A G3 region spans residues Asp444–Gly447. Residues Asp444–His448 and Asn498–Asp501 each bind GTP. A G4 region spans residues Asn498–Asp501. Residues Ser534–Lys536 form a G5 region. The residue at position 808 (Lys808) is an N6-acetyllysine.

The protein belongs to the TRAFAC class translation factor GTPase superfamily. Classic translation factor GTPase family. IF-2 subfamily.

Its subcellular location is the cytoplasm. Its function is as follows. One of the essential components for the initiation of protein synthesis. Protects formylmethionyl-tRNA from spontaneous hydrolysis and promotes its binding to the 30S ribosomal subunits. Also involved in the hydrolysis of GTP during the formation of the 70S ribosomal complex. This Shigella boydii serotype 18 (strain CDC 3083-94 / BS512) protein is Translation initiation factor IF-2.